The sequence spans 943 residues: Mechanosensitive ion channel protein BA (943 aa).

A disordered region spans residues 1-67 (MPNPNDVTID…PPSSSLGFGH (67 aa)). Over 1-107 (MPNPNDVTID…AVLNFSTVTR (107 aa)) the chain is Cytoplasmic. Positions 14–37 (TSVSSRGQTGARNNSTNIPNSPSG) are enriched in polar residues. A helical transmembrane segment spans residues 108-130 (YLIYIAPLAALLAIPIIVGATAA). Residues 131–149 (EDAKIGGVSLPWFFCWVEV) lie on the Lumenal side of the membrane. A helical transmembrane segment spans residues 150–175 (VWVSLWVCKLVAKVIPFVFQFVCGIV). At 176-195 (SAGTRKYALILRNLEIPITM) the chain is on the cytoplasmic side. Residues 196–214 (VLWMIVSLVTFLPIMVYNP) traverse the membrane as a helical segment. At 215-233 (RNKREGDTETKSWEKSVKN) the chain is on the lumenal side. A helical membrane pass occupies residues 234–259 (VLFAFLVCALIFLGEKTLVQLISISY). The Cytoplasmic segment spans residues 260 to 468 (HRKQFDARIK…DQAIHVLDNL (209 aa)). The 36-residue stretch at 412 to 447 (GKEAEAEECFTMLDRDGNGDISLDEIILAISEIGRT) folds into the EF-hand domain. Ca(2+) contacts are provided by D425, D427, N429, D431, and E436. The helical transmembrane segment at 469–489 (LATIAFIIAVLVFVSFVTSGF) threads the bilayer. The Lumenal portion of the chain corresponds to 490–502 (GTVIAAGATSLLS). A helical membrane pass occupies residues 503 to 523 (LSFVFATTAQEVLGSCIFLFV). The Cytoplasmic portion of the chain corresponds to 524–943 (KHPFDIGDRV…QRRNYESRRL (420 aa)). A disordered region spans residues 677-943 (PGAAAEDAAA…QRRNYESRRL (267 aa)). Composition is skewed to low complexity over residues 678-687 (GAAAEDAAAA) and 744-759 (GASATAATGNNSAGSA). Over residues 760-781 (YSETTLNNTVSEPYQRSFTPNT) the composition is skewed to polar residues. The segment covering 798 to 810 (TERHLGVSHDSIA) has biased composition (basic and acidic residues). The span at 827-842 (TTANQSLASPTTMQSE) shows a compositional bias: polar residues. Residues 857–880 (PSSSQYSQQYPQQQSQSPYSYTYS) show a composition bias toward low complexity. Residues 886–904 (PESSLQPLEHTTSYNQSLP) show a composition bias toward polar residues. A compositionally biased stretch (basic and acidic residues) spans 916–943 (NSLEGHSPHVDPRHMTEEQRRNYESRRL).

This sequence belongs to the MscS (TC 1.A.23) family.

Its subcellular location is the cell membrane. The enzyme catalyses Ca(2+)(in) = Ca(2+)(out). In terms of biological role, acts as a mechanosensitive calcium channel in response to membrane stretch. Regulates intracellular calcium levels and cell volume for survival in response to hypo-osmotic shock. Involved in maintaining vacuole integrity and protecting the nuclear envelope upon hypo-osmotic shock. seems to contribute to CaCl2 toxicityIn contracstz to mscA, mscB seems to contribute to CaCl(2) toxicity. The protein is Mechanosensitive ion channel protein BA of Emericella nidulans (strain FGSC A4 / ATCC 38163 / CBS 112.46 / NRRL 194 / M139) (Aspergillus nidulans).